The primary structure comprises 140 residues: Putative nickel-responsive regulator 3 (140 aa).

Positions 81, 92, 94, and 100 each coordinate Ni(2+).

The protein belongs to the transcriptional regulatory CopG/NikR family. It depends on Ni(2+) as a cofactor.

In terms of biological role, transcriptional regulator. The chain is Putative nickel-responsive regulator 3 from Methanosarcina mazei (strain ATCC BAA-159 / DSM 3647 / Goe1 / Go1 / JCM 11833 / OCM 88) (Methanosarcina frisia).